The following is a 99-amino-acid chain: Ferredoxin, heterocyst (99 aa).

Positions 4 to 96 (YQVRLINKKQ…NCTIKTHQEP (93 aa)) constitute a 2Fe-2S ferredoxin-type domain. Positions 42, 47, 50, and 80 each coordinate [2Fe-2S] cluster.

This sequence belongs to the 2Fe2S plant-type ferredoxin family. [2Fe-2S] cluster is required as a cofactor.

In terms of biological role, ferredoxins are iron-sulfur proteins that transfer electrons in a wide variety of metabolic reactions. Donates electrons to the nitrogenase. This chain is Ferredoxin, heterocyst (fdxH), found in Nostoc sp. (strain PCC 7120 / SAG 25.82 / UTEX 2576).